We begin with the raw amino-acid sequence, 435 residues long: Fez family zinc finger protein 2 (435 aa).

The short motif at 27-42 is the Engrailed homology 1 repressor element; the sequence is SLAFSIERIMAKTSEP. C2H2-type zinc fingers lie at residues 254 to 276, 282 to 304, 310 to 332, 338 to 360, 366 to 388, and 394 to 417; these read FTCE…MPVH, FVCK…KIIH, HKCN…IRIH, FVCE…KLTH, YKCT…MHTH, and FTCG…RKLH.

It belongs to the krueppel C2H2-type zinc-finger protein family.

It localises to the nucleus. Functionally, transcription repressor. Component of the regulatory cascade that controls the development of dopaminergic (DA) and serotonergic (5HT) neurons. The chain is Fez family zinc finger protein 2 (fezf2) from Xenopus tropicalis (Western clawed frog).